The primary structure comprises 115 residues: C-C motif chemokine 6 (115 aa).

The first 21 residues, 1–21 (MRHSKTAISFFILVAVLGSQA), serve as a signal peptide directing secretion. 3 cysteine pairs are disulfide-bonded: C49-C72, C50-C88, and C59-C99.

Belongs to the intercrine beta (chemokine CC) family.

It localises to the secreted. This Rattus norvegicus (Rat) protein is C-C motif chemokine 6 (Ccl6).